The following is a 1205-amino-acid chain: MEPGPARPRLAPAARPGWGRAAGCRRRGGPARHGRASGQEDATTAGRQAGGGVRGEGTPAAGDGLGRPLGPTPSQSRFQVDPVSENAGRAAAAAAAAAAAAAAAGAAGKETPAAGKAGGESGVAKGSEEAKGRFRVNFVDPAASSSADDSLSDAAGVGGDGPNVSFQNGGDTVLSEGSSLHSGGGSGHHQQYYYDTHTNTYYLRTFGHNTMDAVPRIDHYRHTAAQLGEKLLRPSLAELHDELEKEPFEDGFANGEESTPTRDAVVAYTAESKGVVKFGWIKGVLVRCMLNIWGVMLFIRLSWIVGQAGIGLSVVVIAMATVVTTITGLSTSAIATNGFVRGGGAYYLISRSLGPEFGGAIGLIFAFANAVAVAMYVVGFAETVVELLKEHSILMIDEINDIRIIGAITVVILLGISVAGMEWEAKAQIVLLVILLLAIADFVIGTFISLESKKPKGFFGYKSEIFNENFGPDFREEETFFSVFAIFFPAATGILAGANISGDLADPQSAIPKGTLLAILITTVVYIGIAVSVGSCVVRDATGNVNDTITTELTNCTSAACKLNFDFSYCESNTCSYGLMNNFQVMSMVSGFAPLISAGIFSATLSSALASLVSAPKIFQALCKDNIYPAFQMFAKGYGKNNEPLRGYILTFLIALGFILIAELNVIAPIISNFFLASYALINFSVFHASLAKSPGWRPAFKYYNMWISLIGAILCCIVMFVINWWAALLTYVIVLGLYIYVTYKKPDVNWGSSTQALTYLSALQHSIRLSGVEDHVKNFRPQCLVMTGSPNSRPALLHLVHDFTKNVGLMICGHVHMGPRRQAMKEMSIDQARYQRWLIKNKMKAFYAPVHADDLREGAQYLMQAAGLGRMKPNTLVLGFKKDWLQADMRDVDMYINLFHDAFDIQFGVVVIRLKEGLDISHLQGQEELLSSQEKSPGTKDVVVNVDYSKKSDQDTCKSSGEKSITQKDEEEDGKTPTQPLLKKESKGPIVPLNVADQKLLEASTQFQKKQGKNTIDVWWLFDDGGLTLLIPYLLTTKKKWKDCKIRVFIGGKINRIDHDRRAMATLLSKFRIDFSDIMVLGDINTKPKKENIIAFDDMIEPYRLHEDDKEQDIADKMKEDEPWRITDNELELYKTKTYRQIRLNELLKEHSSTANIIVMSLPVARKGAVSSALYMAWLEALSKDLPPVLLVRGNHQSVLTFYS.

At M1 the chain carries N-acetylmethionine. Low complexity predominate over residues 1 to 22; sequence MEPGPARPRLAPAARPGWGRAA. The interval 1 to 102 is disordered; it reads MEPGPARPRL…AAAAAAAAAA (102 aa). Over 1 to 279 the chain is Cytoplasmic; sequence MEPGPARPRL…AESKGVVKFG (279 aa). Residues 23–35 show a composition bias toward basic residues; it reads GCRRRGGPARHGR. S74 and S76 each carry phosphoserine. Positions 77–80 match the RFXV motif 1 motif; the sequence is RFQV. Positions 87 to 102 are enriched in low complexity; the sequence is AGRAAAAAAAAAAAAA. Positions 133–136 match the RFXV motif 2 motif; that stretch reads RFRV. The segment covering 143–155 has biased composition (low complexity); sequence ASSSADDSLSDAA. The interval 143–187 is disordered; the sequence is ASSSADDSLSDAAGVGGDGPNVSFQNGGDTVLSEGSSLHSGGGSG. A phosphothreonine mark is found at T196, T200, T205, T210, and T223. S235 carries the post-translational modification Phosphoserine. Residue T259 is modified to Phosphothreonine. A discontinuously helical membrane pass occupies residues 280 to 309; that stretch reads WIKGVLVRCMLNIWGVMLFIRLSWIVGQAG. Residue L290 coordinates Na(+). The K(+) site is built by N291 and I292. Position 293 (W293) interacts with Na(+). Positions 294, 295, and 296 each coordinate chloride. Residues 310-329 traverse the membrane as a helical segment; the sequence is IGLSVVVIAMATVVTTITGL. Residues 330-360 lie on the Cytoplasmic side of the membrane; it reads STSAIATNGFVRGGGAYYLISRSLGPEFGGA. A helical transmembrane segment spans residues 361-388; sequence IGLIFAFANAVAVAMYVVGFAETVVELL. F365 is a binding site for chloride. Residue Y376 participates in K(+) binding. The Extracellular portion of the chain corresponds to 389–398; sequence KEHSILMIDE. Residues 399–422 form a helical membrane-spanning segment; sequence INDIRIIGAITVVILLGISVAGME. Residues 423–425 lie on the Cytoplasmic side of the membrane; the sequence is WEA. A helical transmembrane segment spans residues 426 to 447; it reads KAQIVLLVILLLAIADFVIGTF. The Extracellular portion of the chain corresponds to 448-479; the sequence is ISLESKKPKGFFGYKSEIFNENFGPDFREEET. The chain crosses the membrane as a discontinuously helical span at residues 480-497; that stretch reads FFSVFAIFFPAATGILAG. K(+)-binding residues include P489, A490, and T492. Chloride-binding residues include P489 and A490. Residues G493 and I494 each coordinate chloride. Residues 498-512 lie on the Cytoplasmic side of the membrane; it reads ANISGDLADPQSAIP. Residues 513–534 form a helical membrane-spanning segment; sequence KGTLLAILITTVVYIGIAVSVG. At 535–591 the chain is on the extracellular side; it reads SCVVRDATGNVNDTITTELTNCTSAACKLNFDFSYCESNTCSYGLMNNFQVMSMVSG. Residues N546 and N555 are each glycosylated (N-linked (GlcNAc...) asparagine). 2 disulfide bridges follow: C556/C561 and C570/C575. A helical membrane pass occupies residues 592 to 616; that stretch reads FAPLISAGIFSATLSSALASLVSAP. The Na(+) site is built by A603, S606, and S607. At 617 to 644 the chain is on the cytoplasmic side; the sequence is KIFQALCKDNIYPAFQMFAKGYGKNNEP. The next 2 membrane-spanning stretches (helical) occupy residues 645-665 and 666-684; these read LRGYILTFLIALGFILIAELN and VIAPIISNFFLASYALINF. Positions 675 and 679 each coordinate chloride. Residues 685-707 are Cytoplasmic-facing; it reads SVFHASLAKSPGWRPAFKYYNMW. Transmembrane regions (helical) follow at residues 708–725 and 726–738; these read ISLIGAILCCIVMFVINW and WAALLTYVIVLGL. Topologically, residues 739–1205 are cytoplasmic; that stretch reads YIYVTYKKPD…NHQSVLTFYS (467 aa). Residues 754–771 are scissor helix; the sequence is STQALTYLSALQHSIRLS. Residues S933 and S937 each carry the phosphoserine modification. Residues 953–986 form a disordered region; the sequence is SDQDTCKSSGEKSITQKDEEEDGKTPTQPLLKKE. A Phosphoserine modification is found at S987.

This sequence belongs to the SLC12A transporter family. Homodimer; adopts a domain-swap conformation at the scissor helices connecting the transmembrane domain and C-terminal domain. In terms of processing, phosphorylated at Thr-196, Thr-200 and Thr-205 by OXSR1/OSR1 and STK39/SPAK downstream of WNK kinases (WNK1, WNK2, WNK3 or WNK4), promoting its activity. Widely expressed. High expression found in the cochlea, cochlear lateral wall, and the choroid plexus. Lower expression found in the cerebellum and the cortex.

The protein resides in the basolateral cell membrane. It catalyses the reaction K(+)(out) + 2 chloride(out) + Na(+)(out) = K(+)(in) + 2 chloride(in) + Na(+)(in). Its activity is regulated as follows. Activated following phosphorylation by OXSR1/OSR1 and STK39/SPAK downstream of WNK kinases (WNK1, WNK2, WNK3 or WNK4). Inhibited by bumetanide and furosemide. Cation-chloride cotransporter which mediates the electroneutral transport of chloride, potassium and/or sodium ions across the membrane. Plays a vital role in the regulation of ionic balance and cell volume. This is Solute carrier family 12 member 2 (Slc12a2) from Mus musculus (Mouse).